Reading from the N-terminus, the 623-residue chain is Arginine decarboxylase 2 (623 aa).

Lysine 109 carries the N6-(pyridoxal phosphate)lysine modification. 295-305 (LDCGGGLGVDY) contacts substrate.

It belongs to the Orn/Lys/Arg decarboxylase class-II family. SpeA subfamily. Pyridoxal 5'-phosphate is required as a cofactor. Requires Mg(2+) as cofactor. Expressed in stems (at protein level).

It catalyses the reaction L-arginine + H(+) = agmatine + CO2. It functions in the pathway amine and polyamine biosynthesis; agmatine biosynthesis; agmatine from L-arginine: step 1/1. The protein is Arginine decarboxylase 2 (ADC2) of Oryza sativa subsp. japonica (Rice).